A 564-amino-acid polypeptide reads, in one-letter code: MAAAVVVRRAAGLIPLLSSRFGARMPLHRALSQIPPPRFCRLLSQQTKPFSASASNGAATDRTRELRLYNTKSRKKEQFRPRIPGREVGMYVCGVTPYDDSHIGHARAYVAFDVLYRYLRYLDYEVRYVRNFTDIDDKIIARANQLGEDPFSLSKRFSDDFLSDMANLQCLPPSVEPRVSDHVDEIINMIKQILDNRCAYVVGGDVYFSVDNFPEYGELSGRKLDDNRAGERVAVDERKRNPADFALWKAAKDGEPWWDSPWGPGRPGWHIECSAMSAHYLGHSFDIHGGGEDLIFPHHENEIAQSRAACCDSTINYWIHNGFVNVNSQKMSKSLGNFVTIRKVIEMYHPLALRMFLLGTHYRSPINYTIEQLNVASDRLYYTYQTLRDCEEICQHQQSNTGNPLPANTLNYIQKLHDEFETSMSDDLHTSVALAAMSEPLKVMNDLLHTRKGKKQDKRLESLSALEEKIRVVLSVLGLLPSSYHEALQQLRDKALRRASITEELVVQKIEERTAARKAKQYEKSDEIRKELAAVGIALMDGPDGTTWRPSLPLPEEEAVLAKT.

Residues 1–43 (MAAAVVVRRAAGLIPLLSSRFGARMPLHRALSQIPPPRFCRLL) constitute a chloroplast and mitochondrion transit peptide. Cys93 provides a ligand contact to Zn(2+). A 'HIGH' region motif is present at residues 95-105 (VTPYDDSHIGH). Zn(2+) is bound by residues Cys273, His298, and Glu302. Positions 330–334 (KMSKS) match the 'KMSKS' region motif. Lys333 serves as a coordination point for ATP.

Belongs to the class-I aminoacyl-tRNA synthetase family. Zn(2+) is required as a cofactor.

It localises to the plastid. It is found in the chloroplast. The protein resides in the mitochondrion. It carries out the reaction tRNA(Cys) + L-cysteine + ATP = L-cysteinyl-tRNA(Cys) + AMP + diphosphate. Functionally, nuclear genome-encoded factor required for normal assembly of chloroplast polysomes. This chain is Cysteine--tRNA ligase CPS1, chloroplastic/mitochondrial, found in Zea mays (Maize).